Reading from the N-terminus, the 192-residue chain is MYTARKKIQKDKGLEPSEFEDTVAQAFFDLENGNQELKSDVKDLYINAAFQMDVAGNRKAVVIHVPYRLRKNFRKIHVRLVRELEKKFSGKDVVIVATRRIVRPPKKGSAVVRPRTRTLTAVHDGLLEDVVYPAEIVGKRVRYRLDGSKIIKIFLDPMERNNTEYKLDTFTAVYRRLCGKDVVYEYPVAETA.

The protein belongs to the eukaryotic ribosomal protein eS7 family.

This Secale cereale (Rye) protein is Small ribosomal subunit protein eS7 (RPS7).